Reading from the N-terminus, the 361-residue chain is dTDP-glucose 4,6-dehydratase (361 aa).

NAD(+)-binding positions include 11–12 (FI), 32–35 (DKLT), 58–59 (DI), 80–84 (LAAES), and Thr-99. Ser-84 provides a ligand contact to substrate. Residue Thr-133 participates in substrate binding. Residue Asp-134 is the Proton donor of the active site. Residues Glu-135 and Tyr-167 each act as proton acceptor in the active site. 167 to 171 (YSASK) provides a ligand contact to NAD(+). Asn-196 provides a ligand contact to substrate. Asn-197 contacts NAD(+). Residues 206-207 (KL), 222-224 (PIY), Arg-231, Asn-266, and 296-300 (DRPGH) each bind substrate.

The protein belongs to the NAD(P)-dependent epimerase/dehydratase family. dTDP-glucose dehydratase subfamily. Homodimer. NAD(+) serves as cofactor.

It carries out the reaction dTDP-alpha-D-glucose = dTDP-4-dehydro-6-deoxy-alpha-D-glucose + H2O. It participates in carbohydrate biosynthesis; dTDP-L-rhamnose biosynthesis. It functions in the pathway bacterial outer membrane biogenesis; LPS O-antigen biosynthesis. Functionally, catalyzes the dehydration of dTDP-D-glucose to form dTDP-6-deoxy-D-xylo-4-hexulose via a three-step process involving oxidation, dehydration and reduction. This is dTDP-glucose 4,6-dehydratase (rfbB) from Escherichia coli.